Reading from the N-terminus, the 853-residue chain is DNA mismatch repair protein MutS (853 aa).

613-620 contributes to the ATP binding site; the sequence is GPNMGGKS.

Belongs to the DNA mismatch repair MutS family.

This protein is involved in the repair of mismatches in DNA. It is possible that it carries out the mismatch recognition step. This protein has a weak ATPase activity. This is DNA mismatch repair protein MutS from Vibrio vulnificus (strain YJ016).